The primary structure comprises 389 residues: tRNA-specific 2-thiouridylase MnmA (389 aa).

ATP-binding positions include 21–28 (AMSGGVDS) and Leu47. Catalysis depends on Cys115, which acts as the Nucleophile. Cysteines 115 and 212 form a disulfide. Gly139 lines the ATP pocket. The tract at residues 162–164 (RDQ) is interaction with tRNA. The active-site Cysteine persulfide intermediate is the Cys212.

The protein belongs to the MnmA/TRMU family.

It localises to the cytoplasm. The enzyme catalyses S-sulfanyl-L-cysteinyl-[protein] + uridine(34) in tRNA + AH2 + ATP = 2-thiouridine(34) in tRNA + L-cysteinyl-[protein] + A + AMP + diphosphate + H(+). Functionally, catalyzes the 2-thiolation of uridine at the wobble position (U34) of tRNA, leading to the formation of s(2)U34. This is tRNA-specific 2-thiouridylase MnmA from Xanthobacter autotrophicus (strain ATCC BAA-1158 / Py2).